Here is a 304-residue protein sequence, read N- to C-terminus: Sulfate adenylyltransferase subunit 2 (304 aa).

This sequence belongs to the PAPS reductase family. CysD subfamily. As to quaternary structure, heterodimer composed of CysD, the smaller subunit, and CysNC.

It catalyses the reaction sulfate + ATP + H(+) = adenosine 5'-phosphosulfate + diphosphate. It participates in sulfur metabolism; hydrogen sulfide biosynthesis; sulfite from sulfate: step 1/3. With CysN forms the ATP sulfurylase (ATPS) that catalyzes the adenylation of sulfate producing adenosine 5'-phosphosulfate (APS) and diphosphate, the first enzymatic step in sulfur assimilation pathway. APS synthesis involves the formation of a high-energy phosphoric-sulfuric acid anhydride bond driven by GTP hydrolysis by CysN coupled to ATP hydrolysis by CysD. This is Sulfate adenylyltransferase subunit 2 from Xylella fastidiosa (strain 9a5c).